The sequence spans 397 residues: Elongation factor Tu (397 aa).

In terms of domain architecture, tr-type G spans 10–207; that stretch reads KPHVNIGTLG…AVDNNIPDPV (198 aa). Residues 19–26 are G1; it reads GHVDHGKT. 19 to 26 contributes to the GTP binding site; the sequence is GHVDHGKT. Mg(2+) is bound at residue threonine 26. The G2 stretch occupies residues 63–67; the sequence is GITIN. Residues 84–87 are G3; the sequence is DAPG. GTP is bound by residues 84-88 and 139-142; these read DAPGH and NKSD. Residues 139-142 form a G4 region; the sequence is NKSD. A G5 region spans residues 177–179; it reads SGL.

This sequence belongs to the TRAFAC class translation factor GTPase superfamily. Classic translation factor GTPase family. EF-Tu/EF-1A subfamily. Monomer.

The protein resides in the cytoplasm. The enzyme catalyses GTP + H2O = GDP + phosphate + H(+). Its function is as follows. GTP hydrolase that promotes the GTP-dependent binding of aminoacyl-tRNA to the A-site of ribosomes during protein biosynthesis. In Leifsonia xyli subsp. xyli (strain CTCB07), this protein is Elongation factor Tu.